The primary structure comprises 338 residues: Glyceraldehyde-3-phosphate dehydrogenase (338 aa).

Residues 13 to 14 (RI), Asp-35, and Arg-80 each bind NAD(+). Residues 151-153 (SCT), Thr-182, 211-212 (TG), and Arg-234 each bind D-glyceraldehyde 3-phosphate. Cys-152 acts as the Nucleophile in catalysis. Asn-316 contributes to the NAD(+) binding site.

Belongs to the glyceraldehyde-3-phosphate dehydrogenase family. As to quaternary structure, homotetramer.

The protein localises to the cytoplasm. The catalysed reaction is D-glyceraldehyde 3-phosphate + phosphate + NAD(+) = (2R)-3-phospho-glyceroyl phosphate + NADH + H(+). Its pathway is carbohydrate degradation; glycolysis; pyruvate from D-glyceraldehyde 3-phosphate: step 1/5. The sequence is that of Glyceraldehyde-3-phosphate dehydrogenase (GPD) from Sclerotinia sclerotiorum (White mold).